A 180-amino-acid chain; its full sequence is Ribosome maturation factor RimM (180 aa).

The PRC barrel domain maps to 99–179 (NNEYYWKDIV…IVIKNWKQTF (81 aa)).

It belongs to the RimM family. In terms of assembly, binds ribosomal protein uS19.

It localises to the cytoplasm. Its function is as follows. An accessory protein needed during the final step in the assembly of 30S ribosomal subunit, possibly for assembly of the head region. Essential for efficient processing of 16S rRNA. May be needed both before and after RbfA during the maturation of 16S rRNA. It has affinity for free ribosomal 30S subunits but not for 70S ribosomes. The protein is Ribosome maturation factor RimM of Buchnera aphidicola subsp. Baizongia pistaciae (strain Bp).